The primary structure comprises 372 residues: GDP-mannose transporter GONST3 (372 aa).

Transmembrane regions (helical) follow at residues 33-53 (ASVY…SIIN), 60-80 (FPYP…GVLL), 92-112 (LNLL…LSLF), 125-145 (TFIV…TLFL), 155-175 (WGSL…DYQF), 177-197 (IAAY…FVYI), 209-229 (WGLV…ELLI), 251-271 (VVLP…FGFS), 280-300 (GFTV…LMVW), and 303-323 (HSTF…VMYQ). The interval 331–372 (NATQEAKPQEQDEEQEKLLEMQENKESNSVDIKETLKSEEKL) is disordered. Basic and acidic residues predominate over residues 346–372 (EKLLEMQENKESNSVDIKETLKSEEKL).

It belongs to the nucleotide-sugar transporter family. GDP-Mannose:GMP antiporter (GMA) (TC 2.A.7.13) subfamily. Expressed in rosette leaves, stems, flowers and siliques.

The protein resides in the golgi apparatus membrane. GDP-mannose transporter that may be involved in the import of GDP-mannose from the cytoplasm into the Golgi lumen. The polypeptide is GDP-mannose transporter GONST3 (Arabidopsis thaliana (Mouse-ear cress)).